The chain runs to 200 residues: MTKVLVLYYSSYGHIETMAQAVAEGARSVPGTEVAVKRVPELVPEEVARNAGMKLDQPAPVATVAELAEYDAIIVGSPTRFGRMTSQMANFLDQTGGLWAKGALNGKVGAAFTSTASQHGGQETTLFSILTNLLHHGMVVVGLPYSYEGLSGVEQVKGGTPYGASTIADGDGSRRPTEVELGGARYQGALVARTAAKLRG.

Residues 4-191 (VLVLYYSSYG…GGARYQGALV (188 aa)) form the Flavodoxin-like domain. FMN contacts are provided by residues 10–15 (SSYGHI) and 79–81 (TRF). Tyr-12 lines the NAD(+) pocket. Trp-99 serves as a coordination point for substrate. Residues 114-120 (STASQHG) and His-135 contribute to the FMN site.

Belongs to the WrbA family. FMN serves as cofactor.

The enzyme catalyses a quinone + NADH + H(+) = a quinol + NAD(+). The catalysed reaction is a quinone + NADPH + H(+) = a quinol + NADP(+). The chain is NAD(P)H dehydrogenase (quinone) from Rhodospirillum centenum (strain ATCC 51521 / SW).